A 416-amino-acid chain; its full sequence is Gamma-glutamyl phosphate reductase (416 aa).

It belongs to the gamma-glutamyl phosphate reductase family.

It is found in the cytoplasm. The enzyme catalyses L-glutamate 5-semialdehyde + phosphate + NADP(+) = L-glutamyl 5-phosphate + NADPH + H(+). The protein operates within amino-acid biosynthesis; L-proline biosynthesis; L-glutamate 5-semialdehyde from L-glutamate: step 2/2. Functionally, catalyzes the NADPH-dependent reduction of L-glutamate 5-phosphate into L-glutamate 5-semialdehyde and phosphate. The product spontaneously undergoes cyclization to form 1-pyrroline-5-carboxylate. In Streptococcus pyogenes serotype M3 (strain ATCC BAA-595 / MGAS315), this protein is Gamma-glutamyl phosphate reductase.